The chain runs to 44 residues: Thymosin beta (44 aa).

The disordered stretch occupies residues 1–44; that stretch reads MSDKHDKPDISEVTKFDKSKLKKTETHEKNPLPTKETIDQEKQG. Ser-2 is modified (N-acetylserine).

In terms of tissue distribution, expressed in regenerating axons.

The protein resides in the cytoplasm. The protein localises to the cytoskeleton. Functionally, plays an important role in the organization of the cytoskeleton. Binds to and sequesters actin monomers (G actin) and therefore inhibits actin polymerization. May be involved in the regulation of structural plasticity in the CNS. The protein is Thymosin beta of Aplysia californica (California sea hare).